A 159-amino-acid chain; its full sequence is MNISIISIGKLKEKYLKQGIAEYLKRLSAYAKVEVIELPDEKAPENLSEAEMLIVKEKEGIRILDKISDDTHVIALAIEGKQKSSEEFAVSLDRLATYGKSKVAFVIGGSLGLSSEVMKRSNESLSFSKMTLPHQLMRLVLLEQVYRSFRINRGEPYHK.

S-adenosyl-L-methionine is bound by residues L76, G108, and 127-132; that span reads FSKMTL.

The protein belongs to the RNA methyltransferase RlmH family. As to quaternary structure, homodimer.

The protein localises to the cytoplasm. It carries out the reaction pseudouridine(1915) in 23S rRNA + S-adenosyl-L-methionine = N(3)-methylpseudouridine(1915) in 23S rRNA + S-adenosyl-L-homocysteine + H(+). Specifically methylates the pseudouridine at position 1915 (m3Psi1915) in 23S rRNA. The sequence is that of Ribosomal RNA large subunit methyltransferase H from Bacillus thuringiensis subsp. konkukian (strain 97-27).